The sequence spans 125 residues: Small ribosomal subunit protein bS6 (125 aa).

It belongs to the bacterial ribosomal protein bS6 family.

Functionally, binds together with bS18 to 16S ribosomal RNA. This chain is Small ribosomal subunit protein bS6, found in Campylobacter jejuni (strain RM1221).